We begin with the raw amino-acid sequence, 90 residues long: uncharacterized protein (90 aa).

The segment at 13 to 34 is disordered; sequence APEGMGPHHAASSSHHSAQHHH. A helical transmembrane segment spans residues 52–72; that stretch reads YKMWFLYALILALIFGVFMWW.

Its subcellular location is the host membrane. This is an uncharacterized protein from Invertebrate iridescent virus 3 (IIV-3).